The sequence spans 233 residues: Ubiquitin carboxyl-terminal hydrolase isozyme L4 (233 aa).

In terms of domain architecture, UCH catalytic spans 5–232; it reads RWLPLEANPE…LRFNAIALSA (228 aa). Residues 8–13 form an interaction with ubiquitin region; the sequence is PLEANP. The Nucleophile role is filled by C95. Position 133 is a phosphoserine (S133). Residue H172 is the Proton donor of the active site. Residues 222 to 227 are interaction with ubiquitin; sequence ELRFNA.

The protein belongs to the peptidase C12 family. Expressed in various tissues at low level.

The protein resides in the cytoplasm. It carries out the reaction Thiol-dependent hydrolysis of ester, thioester, amide, peptide and isopeptide bonds formed by the C-terminal Gly of ubiquitin (a 76-residue protein attached to proteins as an intracellular targeting signal).. Functionally, ubiquitin-protein hydrolase is involved both in the processing of ubiquitin precursors and of ubiquitinated proteins. This enzyme is a thiol protease that recognizes and hydrolyzes a peptide bond at the C-terminal glycine of ubiquitin. The sequence is that of Ubiquitin carboxyl-terminal hydrolase isozyme L4 (Uchl4) from Mus musculus (Mouse).